Here is a 475-residue protein sequence, read N- to C-terminus: Trifunctional enzyme subunit beta, mitochondrial (475 aa).

A mitochondrion-targeting transit peptide spans 1–34 (MISLLTYTLKNLPNTSKWALRFCMRPLSSSSQLQ). N6-acetyllysine; alternate is present on Lys73. Lys73 bears the N6-succinyllysine; alternate mark. The active-site Acyl-thioester intermediate is Cys139. The stretch at 174 to 221 (IRHSRKMRKMMLDLNKAKTLAQRLSIISKFRLNFLSPELPAVSEFSTS) is an intramembrane region. Lys189 carries the post-translational modification N6-acetyllysine; alternate. At Lys189 the chain carries N6-succinyllysine; alternate. An N6-succinyllysine mark is found at Lys191 and Lys292. At Lys294 the chain carries N6-acetyllysine; alternate. Lys294 is subject to N6-succinyllysine; alternate. Residue Lys299 is modified to N6-acetyllysine. Lys333 is subject to N6-acetyllysine; alternate. Position 333 is an N6-succinyllysine; alternate (Lys333). 2 positions are modified to N6-acetyllysine: Lys349 and Lys362. Cys459 acts as the Proton donor/acceptor in catalysis.

The protein belongs to the thiolase-like superfamily. Thiolase family. In terms of assembly, heterotetramer of 2 alpha/HADHA and 2 beta/HADHB subunits; forms the mitochondrial trifunctional enzyme. Also purified as higher order heterooligomers including a 4 alpha/HADHA and 4 beta/HADHB heterooligomer which physiological significance remains unclear. The mitochondrial trifunctional enzyme interacts with MTLN. Interacts with RSAD2/viperin.

Its subcellular location is the mitochondrion. The protein resides in the mitochondrion inner membrane. It localises to the mitochondrion outer membrane. It is found in the endoplasmic reticulum. It carries out the reaction an acyl-CoA + acetyl-CoA = a 3-oxoacyl-CoA + CoA. The catalysed reaction is butanoyl-CoA + acetyl-CoA = 3-oxohexanoyl-CoA + CoA. The enzyme catalyses hexanoyl-CoA + acetyl-CoA = 3-oxooctanoyl-CoA + CoA. It catalyses the reaction octanoyl-CoA + acetyl-CoA = 3-oxodecanoyl-CoA + CoA. It carries out the reaction decanoyl-CoA + acetyl-CoA = 3-oxododecanoyl-CoA + CoA. The catalysed reaction is dodecanoyl-CoA + acetyl-CoA = 3-oxotetradecanoyl-CoA + CoA. The enzyme catalyses tetradecanoyl-CoA + acetyl-CoA = 3-oxohexadecanoyl-CoA + CoA. The protein operates within lipid metabolism; fatty acid beta-oxidation. Functionally, mitochondrial trifunctional enzyme catalyzes the last three of the four reactions of the mitochondrial beta-oxidation pathway. The mitochondrial beta-oxidation pathway is the major energy-producing process in tissues and is performed through four consecutive reactions breaking down fatty acids into acetyl-CoA. Among the enzymes involved in this pathway, the trifunctional enzyme exhibits specificity for long-chain fatty acids. Mitochondrial trifunctional enzyme is a heterotetrameric complex composed of two proteins, the trifunctional enzyme subunit alpha/HADHA carries the 2,3-enoyl-CoA hydratase and the 3-hydroxyacyl-CoA dehydrogenase activities, while the trifunctional enzyme subunit beta/HADHB described here bears the 3-ketoacyl-CoA thiolase activity. The polypeptide is Trifunctional enzyme subunit beta, mitochondrial (HADHB) (Bos taurus (Bovine)).